We begin with the raw amino-acid sequence, 605 residues long: Phosphoenolpyruvate carboxykinase (ATP) (605 aa).

Positions 27 to 48 (SGPSSSFINNNNSNNNNNKSSN) are enriched in low complexity. A disordered region spans residues 27 to 67 (SGPSSSFINNNNSNNNNNKSSNMFNHDHVNKTNLHPGGVKP). 307–314 (GLSGTGKT) contributes to the ATP binding site.

This sequence belongs to the phosphoenolpyruvate carboxykinase (ATP) family.

The enzyme catalyses oxaloacetate + ATP = phosphoenolpyruvate + ADP + CO2. It functions in the pathway carbohydrate biosynthesis; gluconeogenesis. The chain is Phosphoenolpyruvate carboxykinase (ATP) (acu-6) from Neurospora crassa (strain ATCC 24698 / 74-OR23-1A / CBS 708.71 / DSM 1257 / FGSC 987).